The sequence spans 1681 residues: MVYTLFQVHTLKFNRKDYDTLSLFYLNRGYYNELSFRVLERCHEKASARPNDSSTMRTFTDFVSGAPIVRSLQKSTIRKYGYNLAPYMFLLLHVDELSIFSAYQASLPGEKKVDTERLKRDLCPRKPTEIKYFSQICNDMMNKKDRLGDILHIILRACALNFGAGPRGGAGDEEDRSITNEEPIIPSVDEHGLKVCKLRSPNTPRRLRKTLDAVKALLVSSCACTARDLDIFDDNNGVAMWKWIKILYHEVAQETALKDSYRITLVPSSDGVSVCGKLFNREYVRGFYFACKAQFDNLWEELNDCFYMPTVVDIASLILRNREVLFREPKRGIDEYLENDSFLQMIPVKYREIVLPKLRRDTNKMTAALKNKVTVAIDELTVPLMWMIHFAVGYPYRYPELQLLAFAGPQRNVYVDDTTRRIQLYTDYNKNGSSEPRLKTLDGLTSDYVFYFVTVLRQMQICALGNSYDAFNHDPWMDVVGFEDPDQVTNRDISRIVLYSYMFLNTAKGCLVEYATFRQYMRELPKNAPQKLNFREMRQGLIALGRHCVGSRFETDLYESATSELMANHSVQTGRNIYGVDSFSLTSVSGTTATLLQERASERWIQWLGLESDYHCSFSSTRNAEDVVAGEAASSDHHQKISRVTRKRPREPKSTNDILVAGQKLFGSSFEFRDLHQLRLCHEIYMADTPSVAVQAPPGYGKTELFHLPLIALASKGDVKYVSFLFVPYTVLLANCMIRLSRCGCLNVAPVRNFIEEGCDGVTDLYVGIYDDLASTNFTDRIAAWENIVECTFRTNNVKLGYLIVDEFHNFETEVYRQSQFGGITNLDFDAFEKAIFLSGTAPEAVADAALQRIGLTGLAKKSMDINELKRSEDLSRGLSSYPTRMFNLIKEKSEVPLGHVHKIWKKVESQPEEALKLLLALFEIEPESKAIVVASTTNEVEELACSWRKYFRVVWIHGKLGAAEKVSRTKEFVTDGSMRVLIGTKLVTEGIDIKQLMMVIMLDNRLNIIELIQGVGRLRDGGLCYLLSRKNSWAARNRKGELPPIKEGCITEQVREFYGLESKKGKKGQHVGCCGSRTDLSADTVELIERMDRLAEKQATASMSIVALPSSFQESNSSDRCRKYCSSDEDSDTCIHGSANASTNATTNSSTNATTTASTNVRTSATTTASINVRTSATTTESTNSSTNATTTASTNVRTSATTTASINVRTSATTTESTNSNTSATTTESTDSNTSATTTESTDSNTSATTTASTNSSTNATTTASTNSSTNATTTESTNASAKEDANKDGNAEDNRFHPVTDINKESYKRKGSQMVLLERKKLKAQFPNTSENMNVLQFLGFRSDEIKHLFLYGIDVYFCPEGVFTQYGLCKGCQKMFELCVCWAGQKVSYRRMAWEALAVERMLRNDEEYKEYLEDIEPYHGDPVGYLKYFSVKRGEIYSQIQRNYAWYLAITRRRETISVLDSTRGKQGSQVFRMSGRQIKELYYKVWSNLRESKTEVLQYFLNWDEKKCREEWEAKDDTVFVEALEKVGVFQRLRSMTSAGLQGPQYVKLQFSRHHRQLRSRYELSLGMHLRDQLALGVTPSKVPHWTAFLSMLIGLFCNKTFRQKLEYLLEQISEVWLLPHWLDLANVEVLAADNTRVPLYMLMVAVHKELDSDDVPDGRFDILLCRDSSREVGE.

The region spanning 683–860 is the Helicase ATP-binding domain; sequence EIYMADTPSV…LQRIGLTGLA (178 aa). 696–703 contributes to the ATP binding site; that stretch reads APPGYGKT. The region spanning 917 to 1066 is the Helicase C-terminal domain; that stretch reads KLLLALFEIE…EFYGLESKKG (150 aa). Over residues 1140 to 1283 the composition is skewed to low complexity; it reads ANASTNATTN…ATTTESTNAS (144 aa). The segment at 1140–1307 is disordered; sequence ANASTNATTN…RFHPVTDINK (168 aa). Residues 1284-1307 are compositionally biased toward basic and acidic residues; the sequence is AKEDANKDGNAEDNRFHPVTDINK.

This sequence belongs to the helicase family. Yeast subtelomeric Y' repeat subfamily.

In terms of biological role, catalyzes DNA unwinding and is involved in telomerase-independent telomere maintenance. This is Y' element ATP-dependent helicase protein 1 copy 2 (YRF1-2) from Saccharomyces cerevisiae (strain ATCC 204508 / S288c) (Baker's yeast).